Reading from the N-terminus, the 802-residue chain is Lon protease (802 aa).

Residues 17–209 (LPILPLNNVV…QVLSFLERER (193 aa)) form the Lon N-terminal domain. 363-370 (GPPGVGKT) provides a ligand contact to ATP. Residues 599–780 (EDEVGVVTGL…DEVLPRVLHP (182 aa)) form the Lon proteolytic domain. Residues Ser-686 and Lys-729 contribute to the active site.

It belongs to the peptidase S16 family. In terms of assembly, homohexamer. Organized in a ring with a central cavity.

Its subcellular location is the cytoplasm. The catalysed reaction is Hydrolysis of proteins in presence of ATP.. In terms of biological role, ATP-dependent serine protease that mediates the selective degradation of mutant and abnormal proteins as well as certain short-lived regulatory proteins. Required for cellular homeostasis and for survival from DNA damage and developmental changes induced by stress. Degrades polypeptides processively to yield small peptide fragments that are 5 to 10 amino acids long. Binds to DNA in a double-stranded, site-specific manner. In Roseiflexus castenholzii (strain DSM 13941 / HLO8), this protein is Lon protease.